Here is a 293-residue protein sequence, read N- to C-terminus: Protease HtpX (293 aa).

2 consecutive transmembrane segments (helical) span residues 4–24 (IALF…ILSL) and 32–52 (VMGL…VSLL). His139 provides a ligand contact to Zn(2+). Residue Glu140 is part of the active site. Residue His143 participates in Zn(2+) binding. Helical transmembrane passes span 158–178 (IVNT…AGFM) and 193–213 (MVYF…ASTI). Glu222 serves as a coordination point for Zn(2+).

This sequence belongs to the peptidase M48B family. Requires Zn(2+) as cofactor.

The protein resides in the cell inner membrane. The protein is Protease HtpX of Erwinia tasmaniensis (strain DSM 17950 / CFBP 7177 / CIP 109463 / NCPPB 4357 / Et1/99).